Consider the following 398-residue polypeptide: Tryptophan synthase beta chain (398 aa).

Position 89 is an N6-(pyridoxal phosphate)lysine (lysine 89).

This sequence belongs to the TrpB family. As to quaternary structure, tetramer of two alpha and two beta chains. Pyridoxal 5'-phosphate is required as a cofactor.

The catalysed reaction is (1S,2R)-1-C-(indol-3-yl)glycerol 3-phosphate + L-serine = D-glyceraldehyde 3-phosphate + L-tryptophan + H2O. The protein operates within amino-acid biosynthesis; L-tryptophan biosynthesis; L-tryptophan from chorismate: step 5/5. In terms of biological role, the beta subunit is responsible for the synthesis of L-tryptophan from indole and L-serine. The protein is Tryptophan synthase beta chain of Methanopyrus kandleri (strain AV19 / DSM 6324 / JCM 9639 / NBRC 100938).